The following is a 272-amino-acid chain: NAD kinase (272 aa).

The active-site Proton acceptor is aspartate 50. NAD(+) is bound by residues 50-51 (DG), 126-127 (NE), arginine 152, aspartate 154, 165-170 (TAYNKS), and alanine 189.

Belongs to the NAD kinase family. It depends on a divalent metal cation as a cofactor.

Its subcellular location is the cytoplasm. It carries out the reaction NAD(+) + ATP = ADP + NADP(+) + H(+). Its function is as follows. Involved in the regulation of the intracellular balance of NAD and NADP, and is a key enzyme in the biosynthesis of NADP. Catalyzes specifically the phosphorylation on 2'-hydroxyl of the adenosine moiety of NAD to yield NADP. The sequence is that of NAD kinase from Streptococcus pneumoniae (strain 70585).